The chain runs to 204 residues: Carbon disulfide hydrolase (204 aa).

Zn(2+) is bound by residues cysteine 35, histidine 88, and cysteine 91.

This sequence belongs to the beta-class carbonic anhydrase family. In terms of assembly, forms a hexadecameric catenane homooligomer, through interactions of two interlocked octameric rings. The cofactor is Zn(2+).

It catalyses the reaction carbon disulfide + 2 H2O = 2 hydrogen sulfide + CO2 + 2 H(+). It participates in sulfur metabolism; hydrogen sulfide biosynthesis. Functionally, catalyzes the conversion of carbon disulfide into hydrogen sulfide and carbon dioxide, with carbonyl sulfide as an intermediate. Likely plays a key role in sulfur metabolism in S.solfataricus. Does not show carbonic anhydrase activity (hydration of CO(2) to carbonate). In Saccharolobus solfataricus (strain ATCC 35092 / DSM 1617 / JCM 11322 / P2) (Sulfolobus solfataricus), this protein is Carbon disulfide hydrolase.